The following is a 399-amino-acid chain: Type II secretion system protein L (399 aa).

Over 1 to 247 (MSKAENTSGK…VKPWKQALLP (247 aa)) the chain is Cytoplasmic. The chain crosses the membrane as a helical span at residues 248–264 (WRNVLIALSAWLLLVLG). Over 265–399 (ESVWTHYQWY…EGQLTLRSQP (135 aa)) the chain is Periplasmic.

It belongs to the GSP L family. Type II secretion system is composed of four main components: the outer membrane complex, the inner membrane complex, the cytoplasmic secretion ATPase and the periplasm-spanning pseudopilus. Forms homodimers. Interacts with OutM/GspM. Interacts with OutE/GspE and OutF/GspF.

It is found in the cell inner membrane. Its function is as follows. Inner membrane component of the type II secretion system required for the energy-dependent secretion of extracellular factors such as proteases and toxins from the periplasm. Plays a role in the complex assembly and recruits OutM resulting in a stable complex in the inner membrane. Provides thus a link between the energy-providing OutE protein in the cytoplasm and the rest of the T2SS machinery. This is Type II secretion system protein L (outL) from Dickeya chrysanthemi (Pectobacterium chrysanthemi).